We begin with the raw amino-acid sequence, 1040 residues long: DNA cross-link repair 1A protein (1040 aa).

The segment at 1 to 190 is nuclear localization region; sequence MLEDISEEDI…RAGDHPFSSP (190 aa). The interval 15–76 is disordered; it reads SKRKPKRVDP…LGNAGCQTSV (62 aa). Residues 53–65 show a composition bias toward basic and acidic residues; the sequence is RAAEAKEVKDHEV. The UBZ4-type zinc finger occupies 119 to 149; the sequence is DGYCPNCQMPFSSLIGQTPRWHVFECLDSPP. Positions 122, 125, 140, and 144 each coordinate Zn(2+). Glycyl lysine isopeptide (Lys-Gly) (interchain with G-Cter in SUMO2) cross-links involve residues Lys-202, Lys-236, Lys-269, Lys-353, Lys-361, Lys-429, Lys-488, Lys-508, Lys-517, Lys-533, and Lys-536. The tract at residues 396–614 is nuclear focus formation; sequence LPYDLACTGG…KSLSDLEFDA (219 aa). Disordered stretches follow at residues 582-602 and 623-651; these read GINL…CKRK and SVEL…ACQK. Ser-590 carries the post-translational modification Phosphoserine. Glycyl lysine isopeptide (Lys-Gly) (interchain with G-Cter in SUMO2) cross-links involve residues Lys-668, Lys-670, and Lys-674.

The protein belongs to the DNA repair metallo-beta-lactamase (DRMBL) family. As to quaternary structure, binds constitutively to TP53BP1. Binds CDC27, which is itself a component of the anaphase promoting complex (APC). Binds PIAS1. In terms of tissue distribution, expressed in brain, heart, kidney, liver, pancreas, placenta and skeletal muscle.

It is found in the nucleus. The catalysed reaction is a beta-lactam + H2O = a substituted beta-amino acid. With respect to regulation, beta-lactamase activity is inhibited by sulbactam. May be required for DNA interstrand cross-link repair. Also required for checkpoint mediated cell cycle arrest in early prophase in response to mitotic spindle poisons. Possesses beta-lactamase activity, catalyzing the hydrolysis of penicillin G and nitrocefin. Exhibits no activity towards other beta-lactam antibiotic classes including cephalosporins (cefotaxime) and carbapenems (imipenem). This Homo sapiens (Human) protein is DNA cross-link repair 1A protein (DCLRE1A).